A 1029-amino-acid chain; its full sequence is Tyrosine-protein kinase-like otk (1029 aa).

A signal peptide spans methionine 1 to alanine 18. Residues serine 19–alanine 577 lie on the Extracellular side of the membrane. Ig-like C2-type domains follow at residues serine 21–serine 104, proline 105–serine 195, proline 247–serine 361, proline 364–asparagine 459, and proline 464–valine 554. N-linked (GlcNAc...) asparagine glycosylation occurs at asparagine 35. Disulfide bonds link cysteine 42-cysteine 91, cysteine 133-cysteine 184, cysteine 272-cysteine 350, and cysteine 395-cysteine 443. N-linked (GlcNAc...) asparagine glycans are attached at residues asparagine 332, asparagine 413, asparagine 425, asparagine 440, asparagine 453, asparagine 508, and asparagine 520. Residues cysteine 486 and cysteine 538 are joined by a disulfide bond. Residues valine 578–tryptophan 598 form a helical membrane-spanning segment. Residues cysteine 599 to lysine 1029 are Cytoplasmic-facing. 2 disordered regions span residues leucine 613 to alanine 675 and serine 714 to methionine 756. Positions lysine 651–arginine 669 are enriched in polar residues. Serine 674 carries the post-translational modification Phosphoserine. Residues leucine 688–methionine 1024 form the Protein kinase; inactive domain. Positions serine 716 to serine 727 are enriched in basic and acidic residues.

Belongs to the protein kinase superfamily. Tyr protein kinase family. Insulin receptor subfamily. As to quaternary structure, interacts with plexA; component of a receptor complex that mediates the repulsive signaling in response to Semaphorin ligands.

Its subcellular location is the cell membrane. Functionally, acts as a calcium-dependent, homophilic cell adhesion molecule that regulates neural recognition during the development of the nervous system. Component of the repulsive Plexin signaling response to regulate motor axon guidance at the embryonic stage. Also component of a receptor complex that is required in the adult visual system to innervate the lamina layer; specific targeting of R1-R6 axons. The sequence is that of Tyrosine-protein kinase-like otk from Drosophila sechellia (Fruit fly).